The sequence spans 320 residues: Aspartate carbamoyltransferase catalytic subunit (320 aa).

Positions 70 and 71 each coordinate carbamoyl phosphate. Lys98 lines the L-aspartate pocket. Residues Arg120, His150, and Gln153 each coordinate carbamoyl phosphate. Residues Arg184 and Arg239 each coordinate L-aspartate. Carbamoyl phosphate is bound by residues Gly280 and Pro281.

This sequence belongs to the aspartate/ornithine carbamoyltransferase superfamily. ATCase family. Heterododecamer (2C3:3R2) of six catalytic PyrB chains organized as two trimers (C3), and six regulatory PyrI chains organized as three dimers (R2).

It catalyses the reaction carbamoyl phosphate + L-aspartate = N-carbamoyl-L-aspartate + phosphate + H(+). The protein operates within pyrimidine metabolism; UMP biosynthesis via de novo pathway; (S)-dihydroorotate from bicarbonate: step 2/3. Functionally, catalyzes the condensation of carbamoyl phosphate and aspartate to form carbamoyl aspartate and inorganic phosphate, the committed step in the de novo pyrimidine nucleotide biosynthesis pathway. The polypeptide is Aspartate carbamoyltransferase catalytic subunit (Xylella fastidiosa (strain Temecula1 / ATCC 700964)).